Reading from the N-terminus, the 448-residue chain is MSENNPVKYLADSDTECQRCKAVPAVLITRKEAFCKNCFIRFIRGKQRKSMIDERYKVKYGAVQEKIGQQKVLLALSGGVSSLVLTDVVASLLQEQIESHKGRMGFELVLLNIDEFELESLNKRIEEILPILVERYAPVNIQYKVLSIESFLIDRAMIQKVLLNKDFTAIAQRLSDEQNKYTVADMLKLCPNKSSMEDLLTVIYEELILRTAFIENCETIIYGHSMTRIANEILALTVRGRGSSVYKAIADHTVQFMDKEFTILFPLRDVLFAEIIAYADLIELNKLEVKSTIVKSKITKNLTIRDLTTNYFSHLDATGYASTASTVVKTGEKLGAPQFKHSYGRCQICGVEIYQDPKEWLRRITVNDAAPIETEEEQEYVNLYKEALSSSETLDTENTHPVNICYGCIVTLSGAKQDTAFVWPLKDKDTNHEDKKVLDEYILTDDEE.

It belongs to the CTU2/NCS2 family.

The protein resides in the cytoplasm. Its pathway is tRNA modification; 5-methoxycarbonylmethyl-2-thiouridine-tRNA biosynthesis. Its function is as follows. Plays a central role in 2-thiolation of mcm(5)S(2)U at tRNA wobble positions of tRNA(Lys), tRNA(Glu) and tRNA(Gln). May act by forming a heterodimer with NCS6 that ligates sulfur from thiocarboxylated URM1 onto the uridine of tRNAs at wobble position. Prior mcm(5) tRNA modification by the elongator complex is required for 2-thiolation. May also be involved in protein urmylation. This chain is Cytoplasmic tRNA 2-thiolation protein 2, found in Scheffersomyces stipitis (strain ATCC 58785 / CBS 6054 / NBRC 10063 / NRRL Y-11545) (Yeast).